A 184-amino-acid chain; its full sequence is Thymidine kinase (184 aa).

ATP-binding positions include 15–22 and 89–92; these read GPMFSGKS and DEIQ. Glu90 (proton acceptor) is an active-site residue. Zn(2+) contacts are provided by Cys146, Cys149, Cys178, and Cys181.

Belongs to the thymidine kinase family. Homotetramer.

Its subcellular location is the cytoplasm. It carries out the reaction thymidine + ATP = dTMP + ADP + H(+). The polypeptide is Thymidine kinase (Mesomycoplasma hyopneumoniae (strain 232) (Mycoplasma hyopneumoniae)).